The primary structure comprises 1058 residues: Carbamoyl phosphate synthase large chain (1058 aa).

The carboxyphosphate synthetic domain stretch occupies residues 1-401 (MPKRTDIQKI…SLLKACRSLE (401 aa)). Arg-129, Arg-169, Gly-175, Gly-176, Arg-208, Ile-210, Glu-215, Gly-241, Ile-242, His-243, Gln-284, and Glu-298 together coordinate ATP. An ATP-grasp 1 domain is found at 133–327 (KQLMEELEQP…IAKLAAKIAV (195 aa)). The Mg(2+) site is built by Gln-284, Glu-298, and Asn-300. 3 residues coordinate Mn(2+): Gln-284, Glu-298, and Asn-300. The interval 402-546 (IGVHHNEIPE…YSTYGWENES (145 aa)) is oligomerization domain. Positions 547 to 929 (IRSDKESVLV…ALYKAFEASY (383 aa)) are carbamoyl phosphate synthetic domain. One can recognise an ATP-grasp 2 domain in the interval 671-861 (EQALKELDIP…MAQVATKLIL (191 aa)). The ATP site is built by Arg-707, Ser-746, Ile-748, Glu-752, Gly-777, Val-778, His-779, Ser-780, Gln-820, and Glu-832. Gln-820, Glu-832, and Asn-834 together coordinate Mg(2+). Mn(2+) contacts are provided by Gln-820, Glu-832, and Asn-834. One can recognise an MGS-like domain in the interval 930 to 1058 (LHLPTFGNVV…ESRSFVTEAI (129 aa)). The tract at residues 930-1058 (LHLPTFGNVV…ESRSFVTEAI (129 aa)) is allosteric domain.

It belongs to the CarB family. Composed of two chains; the small (or glutamine) chain promotes the hydrolysis of glutamine to ammonia, which is used by the large (or ammonia) chain to synthesize carbamoyl phosphate. Tetramer of heterodimers (alpha,beta)4. It depends on Mg(2+) as a cofactor. Mn(2+) is required as a cofactor.

The catalysed reaction is hydrogencarbonate + L-glutamine + 2 ATP + H2O = carbamoyl phosphate + L-glutamate + 2 ADP + phosphate + 2 H(+). It catalyses the reaction hydrogencarbonate + NH4(+) + 2 ATP = carbamoyl phosphate + 2 ADP + phosphate + 2 H(+). Its pathway is amino-acid biosynthesis; L-arginine biosynthesis; carbamoyl phosphate from bicarbonate: step 1/1. The protein operates within pyrimidine metabolism; UMP biosynthesis via de novo pathway; (S)-dihydroorotate from bicarbonate: step 1/3. Large subunit of the glutamine-dependent carbamoyl phosphate synthetase (CPSase). CPSase catalyzes the formation of carbamoyl phosphate from the ammonia moiety of glutamine, carbonate, and phosphate donated by ATP, constituting the first step of 2 biosynthetic pathways, one leading to arginine and/or urea and the other to pyrimidine nucleotides. The large subunit (synthetase) binds the substrates ammonia (free or transferred from glutamine from the small subunit), hydrogencarbonate and ATP and carries out an ATP-coupled ligase reaction, activating hydrogencarbonate by forming carboxy phosphate which reacts with ammonia to form carbamoyl phosphate. The chain is Carbamoyl phosphate synthase large chain from Streptococcus pneumoniae (strain P1031).